The chain runs to 345 residues: MNPITFSVVLTSLASEQFLAVSSSHWLLAWMGLEINTLAIIPLMTQHKHPRAIEASTKYFLTQAAASALLLFSSLNNAWLTGEWSILDLTNPLSCATMTIAICMKLGLAPFHFWLPEVLQGLSLTTGLILSTWQKLAPMAILYQIAPMLNTPLLLTLGLTSTLIGGWGGLNQTQLRKILAFSSIAHLGWMISILPFSPQLMILNLTIYLIMTSTMFLVLKTISSTKISSLATSWSKTPSTTALSLLTLLSLGGLPPLSGFVPKWFIIQELTSQNTTILATTLALSALLSLFFYLRLTYIVTLTSSPNTSNASLTWRHHSKQPTLLLSIALILSSFIIPISPLTLT.

The next 9 membrane-spanning stretches (helical) occupy residues 25–45 (HWLL…PLMT), 60–80 (FLTQ…NAWL), 99–119 (TIAI…PEVL), 149–171 (LNTP…GGLN), 178–198 (ILAF…PFSP), 199–219 (QLMI…FLVL), 242–262 (ALSL…GFVP), 282–302 (LALS…IVTL), and 324–344 (LLLS…PLTL).

This sequence belongs to the complex I subunit 2 family. As to quaternary structure, core subunit of respiratory chain NADH dehydrogenase (Complex I) which is composed of 45 different subunits.

The protein localises to the mitochondrion inner membrane. It carries out the reaction a ubiquinone + NADH + 5 H(+)(in) = a ubiquinol + NAD(+) + 4 H(+)(out). In terms of biological role, core subunit of the mitochondrial membrane respiratory chain NADH dehydrogenase (Complex I) which catalyzes electron transfer from NADH through the respiratory chain, using ubiquinone as an electron acceptor. Essential for the catalytic activity and assembly of complex I. In Xenopus laevis (African clawed frog), this protein is NADH-ubiquinone oxidoreductase chain 2 (mt-nd2).